Here is a 397-residue protein sequence, read N- to C-terminus: Serpin B10 (397 aa).

A Nuclear localization signal motif is present at residues 74-77 (KKRK).

This sequence belongs to the serpin family. Ov-serpin subfamily.

The protein localises to the nucleus. The protein resides in the cytoplasm. Its function is as follows. Protease inhibitor that may play a role in the regulation of protease activities during hematopoiesis and apoptosis induced by TNF. May regulate protease activities in the cytoplasm and in the nucleus. This is Serpin B10 (SERPINB10) from Sorex araneus (Eurasian common shrew).